The following is a 413-amino-acid chain: uncharacterized protein (413 aa).

At lysine 265 the chain carries N6-(pyridoxal phosphate)lysine.

The protein belongs to the threonine aldolase family. It depends on pyridoxal 5'-phosphate as a cofactor.

This is an uncharacterized protein from Caenorhabditis elegans.